A 789-amino-acid polypeptide reads, in one-letter code: SH3 domain-containing protein 19 (789 aa).

3 disordered regions span residues 24–170 (TNTE…PPRL), 209–404 (DDDV…RPKP), and 472–497 (TPLDERPRGRPNDSGHSQKPVDSGAP). Phosphoserine is present on serine 65. Basic and acidic residues predominate over residues 296–305 (SHSDRTRNPE). Residues 335–351 (WRPPPKGAPERPPPPKL) are compositionally biased toward pro residues. Residues 352-361 (PASKSSNKNL) show a composition bias toward low complexity. Serine 368 is subject to Phosphoserine. SH3 domains follow at residues 414 to 476 (LSVP…PLDE), 494 to 553 (SGAP…VIVD), 570 to 629 (AKGP…LVGD), 660 to 719 (PPGE…PCPA), and 729 to 788 (PKGR…FLQV). Over residues 474 to 484 (LDERPRGRPND) the composition is skewed to basic and acidic residues. Residues 635–663 (ANILSTKVPPKTKNEDPGSNSQDSSPPGE) are disordered.

Interacts with ADAM12. Isoform 2 (but not isoform 1) interacts with ADAM9, ADAM10, ADAM15 and ADAM17. Interacts with SH3GL1 SH3 domain. Interacts via SH3 3 and SH3 4 or SH3 4 and SH3 5 domains with SOS2. Probably forms a trimeric complex with SH3GL1 and SOS2. Interacts with SH3YL1. In terms of tissue distribution, expressed in hair follicles.

The protein localises to the cytoplasm. Functionally, may play a role in regulating A disintegrin and metalloproteases (ADAMs) in the signaling of EGFR-ligand shedding. May be involved in suppression of Ras-induced cellular transformation and Ras-mediated activation of ELK1. Plays a role in the regulation of cell morphology and cytoskeletal organization. The polypeptide is SH3 domain-containing protein 19 (Sh3d19) (Mus musculus (Mouse)).